A 432-amino-acid polypeptide reads, in one-letter code: DNA damage-binding protein 2 (432 aa).

The interval 1 to 31 (MAPKKCPETQKSPDVAVLLRSKSRRGPQELE) is disordered. 2 positions are modified to N6-acetyllysine: Lys-35 and Lys-77. Required for interaction with DDB1 regions lie at residues 68–79 (SIVRDLYQHKLG) and 87–98 (QQGLQKSFLHSL). 5 WD repeats span residues 116–151 (SLAW…IFLK), 159–194 (ITGL…LRVY), 203–238 (WFCS…LWNL), 244–287 (KVAH…SLPH), and 290–329 (PVNA…LISH). Residues 256-274 (WLLATASIDQTVKIWDLRQ) carry the DWD box motif. A photolesion recognition region spans residues 334–336 (FQH). 2 WD repeats span residues 343–386 (TWHS…MCQL) and 396–420 (SLNE…IWSQ).

This sequence belongs to the WD repeat DDB2/WDR76 family. As to quaternary structure, component of the UV-DDB complex which includes DDB1 and DDB2. The UV-DDB complex interacts with monoubiquitinated histone H2A and binds to XPC via the DDB2 subunit. Component of the DCX (DDB1-CUL4-X-box) E3 ubiquitin-protein ligase complex DDB1-CUL4-ROC1 (also known as CUL4-DDB-ROC1 and CUL4-DDB-RBX1), which includes CUL4A or CUL4B, DDB1, DDB2 and RBX1. DDB2 may function as the substrate recognition module within this complex. The DDB1-CUL4-ROC1 complex may associate with the COP9 signalosome, and this inhibits the E3 ubiquitin-protein ligase activity of the complex. A large number of other DCX complexes may also exist in which an alternate substrate targeting subunit replaces DDB2. These targeting subunits are generally known as DCAF (DDB1- and CUL4-associated factor) or CDW (CUL4-DDB1-associated WD40-repeat) proteins. Phosphorylation by ABL1 negatively regulate UV-DDB activity. In terms of processing, ubiquitinated by CUL4A in response to UV irradiation. Ubiquitination appears to both impair DNA-binding and promotes ubiquitin-dependent proteolysis. Degradation of DDB2 at sites of DNA damage may be a prerequisite for their recognition by XPC and subsequent repair. CUL4A-mediated degradation appears to be promoted by ABL1. Post-translationally, ubiquitinated, leading to proteasomal degradation, and deubiquitinated by USP24. Deubiquitinated by USP44; leading to its stabilization on DNA lesions. Acetylated. Deacetylation by SIRT6 in response to UV stress facilitates nucleotide excision repair pathway (the NER pathway) transduction. Expressed in bone marrow, liver, lung, muscle, pancreas and spleen.

It localises to the nucleus. Its subcellular location is the chromosome. It participates in protein modification; protein ubiquitination. Functionally, protein, which is both involved in DNA repair and protein ubiquitination, as part of the UV-DDB complex and DCX (DDB1-CUL4-X-box) complexes, respectively. Core component of the UV-DDB complex (UV-damaged DNA-binding protein complex), a complex that recognizes UV-induced DNA damage and recruit proteins of the nucleotide excision repair pathway (the NER pathway) to initiate DNA repair. The UV-DDB complex preferentially binds to cyclobutane pyrimidine dimers (CPD), 6-4 photoproducts (6-4 PP), apurinic sites and short mismatches. Also functions as the substrate recognition module for the DCX (DDB2-CUL4-X-box) E3 ubiquitin-protein ligase complex DDB2-CUL4-ROC1 (also known as CUL4-DDB-ROC1 and CUL4-DDB-RBX1). The DDB2-CUL4-ROC1 complex may ubiquitinate histone H2A, histone H3 and histone H4 at sites of UV-induced DNA damage. The ubiquitination of histones may facilitate their removal from the nucleosome and promote subsequent DNA repair. The DDB2-CUL4-ROC1 complex also ubiquitinates XPC, which may enhance DNA-binding by XPC and promote NER. The DDB2-CUL4-ROC1 complex also ubiquitinates KAT7/HBO1 in response to DNA damage, leading to its degradation: recognizes KAT7/HBO1 following phosphorylation by ATR. This is DNA damage-binding protein 2 (Ddb2) from Mus musculus (Mouse).